Consider the following 590-residue polypeptide: Probable lysine-specific demethylase 4B (590 aa).

In terms of domain architecture, JmjN spans 9 to 51 (IKVFRPTWEEFKDFPKYVAYMESQGAHKAGLAKVVPPPEWVPR). Position 130 (Tyr-130) interacts with 2-oxoglutarate. Positions 140 to 306 (DTDQDSWNIN…YGKRAVQCTC (167 aa)) constitute a JmjC domain. Fe cation is bound by residues His-186 and Glu-188. Residues Asn-196 and Lys-204 each contribute to the 2-oxoglutarate site. Zn(2+) contacts are provided by Cys-232 and His-238. Residue Lys-239 coordinates 2-oxoglutarate. His-274 contributes to the Fe cation binding site. Residues Cys-304 and Cys-306 each coordinate Zn(2+). 2 disordered regions span residues 372–395 (PTKA…QNPN) and 417–590 (ATDE…TASP). A compositionally biased stretch (acidic residues) spans 445–458 (EYIDDGTEDDDEEE). The segment covering 480–494 (SKRKTNSRNNRGRSP) has biased composition (basic residues). 2 stretches are compositionally biased toward low complexity: residues 502-513 (ISPASSTSSTSR) and 537-571 (TTSP…TPPA).

The protein belongs to the JHDM3 histone demethylase family. It depends on Fe(2+) as a cofactor.

Its subcellular location is the nucleus. The enzyme catalyses N(6),N(6),N(6)-trimethyl-L-lysyl(9)-[histone H3] + 2 2-oxoglutarate + 2 O2 = N(6)-methyl-L-lysyl(9)-[histone H3] + 2 formaldehyde + 2 succinate + 2 CO2. Its function is as follows. Probable histone demethylase that specifically demethylates 'Lys-9' and 'Lys-36' residues of histone H3, thereby playing a central role in histone code. Demethylation of Lys residue generates formaldehyde and succinate. In Drosophila melanogaster (Fruit fly), this protein is Probable lysine-specific demethylase 4B (Kdm4B).